The following is a 291-amino-acid chain: 4-hydroxy-tetrahydrodipicolinate synthase (291 aa).

Thr-45 lines the pyruvate pocket. Tyr-131 functions as the Proton donor/acceptor in the catalytic mechanism. Lys-159 serves as the catalytic Schiff-base intermediate with substrate. Ile-202 provides a ligand contact to pyruvate.

This sequence belongs to the DapA family. As to quaternary structure, homotetramer; dimer of dimers.

The protein localises to the cytoplasm. It carries out the reaction L-aspartate 4-semialdehyde + pyruvate = (2S,4S)-4-hydroxy-2,3,4,5-tetrahydrodipicolinate + H2O + H(+). Its pathway is amino-acid biosynthesis; L-lysine biosynthesis via DAP pathway; (S)-tetrahydrodipicolinate from L-aspartate: step 3/4. In terms of biological role, catalyzes the condensation of (S)-aspartate-beta-semialdehyde [(S)-ASA] and pyruvate to 4-hydroxy-tetrahydrodipicolinate (HTPA). The sequence is that of 4-hydroxy-tetrahydrodipicolinate synthase from Methanosarcina barkeri (strain Fusaro / DSM 804).